The following is an 830-amino-acid chain: Formin-like protein 14 (830 aa).

An N-terminal signal peptide occupies residues 1 to 34 (MAMAMAMPSSSPPLFFSLLNLMLLLLLLAPYCSA). A compositionally biased stretch (polar residues) spans 40-59 (NNTHHRSSSPTQTTLQQLHS). The segment at 40–195 (NNTHHRSSSP…NISTLVHPTQ (156 aa)) is disordered. 2 stretches are compositionally biased toward pro residues: residues 61-86 (DSPPPPPLPTPTVTTPTPPPPPPAPR) and 95-135 (PPPP…PTPK). Over residues 149-160 (YPFTNYPFFPNF) the composition is skewed to low complexity. Residues 203-223 (VLQALLLSFLSLCLLLLSALL) form a helical membrane-spanning segment. The tract at residues 235-446 (HHSHSHPNAR…LHSDKLKPGS (212 aa)) is disordered. A compositionally biased stretch (pro residues) spans 314 to 323 (RPLPPLPRVG). The segment covering 324 to 369 (PPSGEFASRSSASDPSTAPPAAAEASSSSLSPSSPSASSPTLGSSP) has biased composition (low complexity). The 434-residue stretch at 390-823 (PKRRPQPPEP…MMGRDWNMAA (434 aa)) folds into the FH2 domain. Basic and acidic residues predominate over residues 424-446 (HSPSEKSMRKSRPLHSDKLKPGS).

It belongs to the formin-like family. Class-I subfamily.

The protein resides in the membrane. This chain is Formin-like protein 14 (FH14), found in Oryza sativa subsp. japonica (Rice).